Consider the following 68-residue polypeptide: Large ribosomal subunit protein uL29 (68 aa).

It belongs to the universal ribosomal protein uL29 family.

This Streptococcus sanguinis (strain SK36) protein is Large ribosomal subunit protein uL29.